A 491-amino-acid chain; its full sequence is Aspartyl/glutamyl-tRNA(Asn/Gln) amidotransferase subunit B (491 aa).

This sequence belongs to the GatB/GatE family. GatB subfamily. In terms of assembly, heterotrimer of A, B and C subunits.

The enzyme catalyses L-glutamyl-tRNA(Gln) + L-glutamine + ATP + H2O = L-glutaminyl-tRNA(Gln) + L-glutamate + ADP + phosphate + H(+). It catalyses the reaction L-aspartyl-tRNA(Asn) + L-glutamine + ATP + H2O = L-asparaginyl-tRNA(Asn) + L-glutamate + ADP + phosphate + 2 H(+). Allows the formation of correctly charged Asn-tRNA(Asn) or Gln-tRNA(Gln) through the transamidation of misacylated Asp-tRNA(Asn) or Glu-tRNA(Gln) in organisms which lack either or both of asparaginyl-tRNA or glutaminyl-tRNA synthetases. The reaction takes place in the presence of glutamine and ATP through an activated phospho-Asp-tRNA(Asn) or phospho-Glu-tRNA(Gln). This Burkholderia cenocepacia (strain HI2424) protein is Aspartyl/glutamyl-tRNA(Asn/Gln) amidotransferase subunit B.